We begin with the raw amino-acid sequence, 32 residues long: Ferredoxin (32 aa).

Positions 3-32 (YKVRLLSEAEGIDVTIDCADDVYILDAAEE) constitute a 2Fe-2S ferredoxin-type domain.

The protein belongs to the 2Fe2S plant-type ferredoxin family. The cofactor is [2Fe-2S] cluster.

The protein localises to the plastid. The protein resides in the chloroplast. Its function is as follows. Ferredoxins are iron-sulfur proteins that transfer electrons in a wide variety of metabolic reactions. The protein is Ferredoxin of Porphyridium purpureum (Red alga).